Here is a 452-residue protein sequence, read N- to C-terminus: Neuronal acetylcholine receptor subunit alpha-5 (452 aa).

A signal peptide spans 1-27 (MVQLLAGRWRPTGARRGTRGGLPELSS). At 28-239 (AAKHEDSLFR…VIKRLPLFYT (212 aa)) the chain is on the extracellular side. N-linked (GlcNAc...) asparagine glycosylation is found at Asn-140, Asn-168, and Asn-214. Cys-155 and Cys-169 are disulfide-bonded. Cys-219 and Cys-220 form a disulfide bridge. The next 3 membrane-spanning stretches (helical) occupy residues 240 to 260 (LFLI…FYLP), 269 to 289 (LCTS…EIIP), and 302 to 322 (LVFT…AINI). Topologically, residues 323 to 414 (HHRSSSTHNA…KFIAQVLDRM (92 aa)) are cytoplasmic. Residues 415 to 435 (FLWTFLLVSIIGTLGLFVPVI) form a helical membrane-spanning segment. The Extracellular portion of the chain corresponds to 436–452 (YKWANIIVPVHIGNTIK).

It belongs to the ligand-gated ion channel (TC 1.A.9) family. Acetylcholine receptor (TC 1.A.9.1) subfamily. Alpha-5/CHRNA5 sub-subfamily. As to quaternary structure, neuronal AChR that forms heteropentamers composed of two different type of subunits: alpha and non-alpha (beta). CHRNA5/alpha-5 subunit is only able to form functional nAChRs when co-assembled with another alpha subunit, can be combined to CHRNA4/alpha-4 or CHRNA3/alpha-3 and CHRNB4/beta-4 or CHRNB2/beta-2 to give rise to functional receptors. Interacts with LYPD6.

It is found in the synaptic cell membrane. Its subcellular location is the cell membrane. It carries out the reaction Ca(2+)(in) = Ca(2+)(out). The catalysed reaction is K(+)(in) = K(+)(out). It catalyses the reaction Na(+)(in) = Na(+)(out). With respect to regulation, activated by a myriad of ligands such as acetylcholine, cytisine, nicotine, choline and epibatidine. Its function is as follows. Component of neuronal acetylcholine receptors (nAChRs) that function as pentameric, ligand-gated cation channels with high calcium permeability among other activities. nAChRs are excitatory neurotrasnmitter receptors formed by a collection of nAChR subunits known to mediate synaptic transmission in the nervous system and the neuromuscular junction. Each nAchR subunit confers differential attributes to channel properties, including activation, deactivation and desensitization kinetics, pH sensitivity, cation permeability, and binding to allosteric modulators. Has an accessory rather than functional role and is only able to form functional nAChRs when co-assembled with another beta subunit. Participates in pentameric assemblies along with CHRNA3, CHRNA4, CHRNB2 and CHRNB4. Increases receptor sensitivity to acetylcholine and nicotine when associated with CHRNA4 and CHRNB2. Plays a role in nicotine addiction. This chain is Neuronal acetylcholine receptor subunit alpha-5 (Chrna5), found in Rattus norvegicus (Rat).